The following is a 348-amino-acid chain: UPF0324 membrane protein BPP3732 (348 aa).

Helical transmembrane passes span 20 to 39 (GILFVALMAAAVVQLADLPF), 43 to 62 (FGFSPLVVGIVCGMLYGNFL), 98 to 120 (IAAVGLPGLAVSVGVVASTLLIG), 135 to 157 (AMLTAAGSAICGAAAVLAFEPTL), 164 to 186 (SAVAVATVVLFGTLSMFLYPVIY), 196 to 215 (QALGIYIGGTVHEVAQVVGA), 235 to 257 (VALLVPVLLVLGFWLRASAAAGA), 267 to 286 (VPWFAIGFLVLAIVNSLDIL), 299 to 318 (VFVLTMAMTALGIETRFAQI), and 322 to 344 (GPRVMALGLVLYAWLVFGGYGIV).

This sequence belongs to the UPF0324 family.

Its subcellular location is the cell membrane. This chain is UPF0324 membrane protein BPP3732, found in Bordetella parapertussis (strain 12822 / ATCC BAA-587 / NCTC 13253).